The following is a 155-amino-acid chain: Methylated-DNA--protein-cysteine methyltransferase (155 aa).

Catalysis depends on C119, which acts as the Nucleophile; methyl group acceptor.

This sequence belongs to the MGMT family.

The protein resides in the cytoplasm. The enzyme catalyses a 6-O-methyl-2'-deoxyguanosine in DNA + L-cysteinyl-[protein] = S-methyl-L-cysteinyl-[protein] + a 2'-deoxyguanosine in DNA. It carries out the reaction a 4-O-methyl-thymidine in DNA + L-cysteinyl-[protein] = a thymidine in DNA + S-methyl-L-cysteinyl-[protein]. Functionally, involved in the cellular defense against the biological effects of O6-methylguanine (O6-MeG) and O4-methylthymine (O4-MeT) in DNA. Repairs the methylated nucleobase in DNA by stoichiometrically transferring the methyl group to a cysteine residue in the enzyme. This is a suicide reaction: the enzyme is irreversibly inactivated. In Sulfolobus acidocaldarius (strain ATCC 33909 / DSM 639 / JCM 8929 / NBRC 15157 / NCIMB 11770), this protein is Methylated-DNA--protein-cysteine methyltransferase.